The primary structure comprises 352 residues: Anthranilate phosphoribosyltransferase (352 aa).

5-phospho-alpha-D-ribose 1-diphosphate-binding positions include glycine 83, 86–87, threonine 91, 93–96, 111–119, and alanine 123; these read GD, NIST, and KHGGRSVSS. Glycine 83 contacts anthranilate. Position 95 (serine 95) interacts with Mg(2+). Arginine 169 serves as a coordination point for anthranilate. Residues aspartate 228 and glutamate 229 each coordinate Mg(2+).

It belongs to the anthranilate phosphoribosyltransferase family. As to quaternary structure, homodimer. Requires Mg(2+) as cofactor.

The enzyme catalyses N-(5-phospho-beta-D-ribosyl)anthranilate + diphosphate = 5-phospho-alpha-D-ribose 1-diphosphate + anthranilate. It functions in the pathway amino-acid biosynthesis; L-tryptophan biosynthesis; L-tryptophan from chorismate: step 2/5. Catalyzes the transfer of the phosphoribosyl group of 5-phosphorylribose-1-pyrophosphate (PRPP) to anthranilate to yield N-(5'-phosphoribosyl)-anthranilate (PRA). The polypeptide is Anthranilate phosphoribosyltransferase (Neisseria meningitidis serogroup C (strain 053442)).